A 205-amino-acid polypeptide reads, in one-letter code: Urease accessory protein UreG (205 aa).

Residue 14 to 21 (GPVGSGKT) coordinates GTP.

The protein belongs to the SIMIBI class G3E GTPase family. UreG subfamily. Homodimer. UreD, UreF and UreG form a complex that acts as a GTP-hydrolysis-dependent molecular chaperone, activating the urease apoprotein by helping to assemble the nickel containing metallocenter of UreC. The UreE protein probably delivers the nickel.

It is found in the cytoplasm. In terms of biological role, facilitates the functional incorporation of the urease nickel metallocenter. This process requires GTP hydrolysis, probably effectuated by UreG. The sequence is that of Urease accessory protein UreG from Citrobacter koseri (strain ATCC BAA-895 / CDC 4225-83 / SGSC4696).